We begin with the raw amino-acid sequence, 292 residues long: Oxidative stress-responsive serine-rich protein 1 (292 aa).

The disordered stretch occupies residues 27–175; that stretch reads SIASLSVGEG…SSDATQVSQA (149 aa). Residues 65–83 are compositionally biased toward basic residues; the sequence is STRKSSRGVVRTQRRRRSK. 2 positions are modified to phosphothreonine: T143 and T233.

The polypeptide is Oxidative stress-responsive serine-rich protein 1 (OSER1) (Pongo abelii (Sumatran orangutan)).